The following is a 440-amino-acid chain: Putative sodium-coupled neutral amino acid transporter 8 (440 aa).

Transmembrane regions (helical) follow at residues 29–49 (AIFI…PWAF), 58–78 (AIMV…ILGY), 100–120 (IGKL…VAFL), 156–176 (FAIT…KEIS), 183–203 (ILGT…YYVM), 223–243 (MFSV…CVTI), 255–275 (WAAV…FTGI), 300–320 (VIIA…IILL), 350–370 (VVIT…VPDI), 373–393 (VISV…GLCL), and 418–438 (VVCG…EIIA).

The protein belongs to the amino acid/polyamine transporter 2 family.

The protein localises to the membrane. Functionally, putative sodium-dependent amino acid/proton antiporter. This chain is Putative sodium-coupled neutral amino acid transporter 8 (slc38a8), found in Xenopus tropicalis (Western clawed frog).